We begin with the raw amino-acid sequence, 653 residues long: J protein JJJ2 (653 aa).

Residues 14-78 (TLYSVLNLKY…KEKMKYDSKL (65 aa)) form the J domain. Disordered stretches follow at residues 85–308 (DYSP…SSTE) and 490–512 (VSPK…EENL). 2 stretches are compositionally biased toward polar residues: residues 161–171 (NAKSYQNSKKS) and 187–200 (ATSF…SSSV). Positions 213 to 241 (SGSAVGSESRISSSGSESSSNVNSATGSS) are enriched in low complexity. Residues 298–308 (PVKTTPNSSTE) are compositionally biased toward polar residues.

The protein resides in the cytoplasm. It is found in the nucleus. The chain is J protein JJJ2 (JJJ2) from Kluyveromyces lactis (strain ATCC 8585 / CBS 2359 / DSM 70799 / NBRC 1267 / NRRL Y-1140 / WM37) (Yeast).